The following is a 615-amino-acid chain: DNA mismatch repair protein MutL (615 aa).

Residues 363–397 (FAEPAAREPVAPRYTPAPASGSRPAAPWPNAQPGY) form a disordered region. Over residues 364 to 391 (AEPAAREPVAPRYTPAPASGSRPAAPWP) the composition is skewed to low complexity.

This sequence belongs to the DNA mismatch repair MutL/HexB family.

Its function is as follows. This protein is involved in the repair of mismatches in DNA. It is required for dam-dependent methyl-directed DNA mismatch repair. May act as a 'molecular matchmaker', a protein that promotes the formation of a stable complex between two or more DNA-binding proteins in an ATP-dependent manner without itself being part of a final effector complex. The sequence is that of DNA mismatch repair protein MutL from Escherichia coli (strain K12 / MC4100 / BW2952).